Consider the following 629-residue polypeptide: Tudor and KH domain-containing protein homolog (629 aa).

The chain crosses the membrane as a helical span at residues 9-29; that stretch reads LPIALGLSLVTVTAFVAYYVL. KH domains follow at residues 46–109 and 119–185; these read INTI…ETLI and IMSE…KKLV. Residues 198-240 are disordered; that stretch reads IEQSKRPPRHSSSPPSPCPSPGDRDADADAQGDVDHTRVKYKR. Residues 219–240 are compositionally biased toward basic and acidic residues; it reads GDRDADADAQGDVDHTRVKYKR. The Tudor domain maps to 297 to 362; that stretch reads HVSVGQVVAA…CELRADLLRL (66 aa). The segment at 464-526 is disordered; it reads PAPSPRPSPP…GDDSKDKDGI (63 aa).

Belongs to the Tdrkh family. In terms of assembly, interacts with (symmetrically methylated) Siwi. Interacts with (symmetrically methylated) Ago3. Interacts with PNLDC1/trimmer; interaction takes place on the mitochondrial surface and recruits PNLDC1/trimmer to Siwi-bound pre-piRNAs.

The protein localises to the mitochondrion outer membrane. In terms of biological role, participates in the primary piRNA biogenesis pathway and is required during spermatogenesis to repress transposable elements and prevent their mobilization, which is essential for the germline integrity. The piRNA metabolic process mediates the repression of transposable elements during meiosis by forming complexes composed of piRNAs and Piwi proteins (Siwi or Ago3) and govern the methylation and subsequent repression of transposons. Required for the final steps of primary piRNA biogenesis by participating in the processing of 31-37 nt intermediates into mature piRNAs: acts by recruiting the exonuclease PNLDC1/trimmer to Siwi-bound pre-piRNAs. The polypeptide is Tudor and KH domain-containing protein homolog (Bombyx mori (Silk moth)).